We begin with the raw amino-acid sequence, 233 residues long: UPF0502 protein YPTS_2082 (233 aa).

Belongs to the UPF0502 family.

The chain is UPF0502 protein YPTS_2082 from Yersinia pseudotuberculosis serotype IB (strain PB1/+).